A 454-amino-acid polypeptide reads, in one-letter code: Asparagine--tRNA ligase (454 aa).

The protein belongs to the class-II aminoacyl-tRNA synthetase family. As to quaternary structure, homodimer.

It localises to the cytoplasm. It catalyses the reaction tRNA(Asn) + L-asparagine + ATP = L-asparaginyl-tRNA(Asn) + AMP + diphosphate + H(+). The polypeptide is Asparagine--tRNA ligase (Mesoplasma florum (strain ATCC 33453 / NBRC 100688 / NCTC 11704 / L1) (Acholeplasma florum)).